The chain runs to 173 residues: Flagellar assembly factor FliW (173 aa).

A disordered region spans residues Ser152 to Glu173.

Belongs to the FliW family. Interacts with translational regulator CsrA and flagellin(s).

Its subcellular location is the cytoplasm. In terms of biological role, acts as an anti-CsrA protein, binds CsrA and prevents it from repressing translation of its target genes, one of which is flagellin. Binds to flagellin and participates in the assembly of the flagellum. The protein is Flagellar assembly factor FliW of Nitratidesulfovibrio vulgaris (strain ATCC 29579 / DSM 644 / CCUG 34227 / NCIMB 8303 / VKM B-1760 / Hildenborough) (Desulfovibrio vulgaris).